A 227-amino-acid polypeptide reads, in one-letter code: Ribosomal RNA large subunit methyltransferase E (227 aa).

The S-adenosyl-L-methionine site is built by G78, W80, D103, D119, and D143. K183 acts as the Proton acceptor in catalysis.

It belongs to the class I-like SAM-binding methyltransferase superfamily. RNA methyltransferase RlmE family.

The protein resides in the cytoplasm. It carries out the reaction uridine(2552) in 23S rRNA + S-adenosyl-L-methionine = 2'-O-methyluridine(2552) in 23S rRNA + S-adenosyl-L-homocysteine + H(+). Its function is as follows. Specifically methylates the uridine in position 2552 of 23S rRNA at the 2'-O position of the ribose in the fully assembled 50S ribosomal subunit. This is Ribosomal RNA large subunit methyltransferase E from Rickettsia africae (strain ESF-5).